The sequence spans 467 residues: Putative odorant receptor 85e (467 aa).

At 1-60 (MASLQFHGNVDADIRYDISLDPARESNLFRLLMGLQLANGTKPSPRLPKWWPKRLEMIGK) the chain is on the cytoplasmic side. Residues 61 to 81 (VLPKAYCSMVIFTSLHLGVLF) traverse the membrane as a helical segment. Topologically, residues 82–98 (TKTTLDVLPTGELQAIT) are extracellular. Residues 99–119 (DALTMTIIYFFTGYGTIYWCL) traverse the membrane as a helical segment. The Cytoplasmic segment spans residues 120 to 159 (RSRRLLAYMEHMNREYRHHSLAGVTFVSSHAAFRMSRNFT). Residues 160-180 (VVWIMSCLLGVISWGVSPLML) form a helical membrane-spanning segment. The Extracellular segment spans residues 181–212 (GIRMLPLQCWYPFDALGPGTYTAVYATQLFGQ). The helical transmembrane segment at 213 to 233 (IMVGMTFGFGGSLFVTLSLLL) threads the bilayer. Residues 234–286 (LGQFDVLYCSLKNLDAHTKLLGGESVNGLSSLQEELLLGDSKRELNQYVLLQE) are Cytoplasmic-facing. Residues 287–307 (HPTDLLRLSAGRKCPDQGNAF) traverse the membrane as a helical segment. Residues 308-334 (HNALVECIRLHRFILHCSQELENLFSP) lie on the Extracellular side of the membrane. A helical transmembrane segment spans residues 335–355 (YCLVKSLQITFQLCLLVFVGV). At 356 to 367 (SGTREVLRIVNQ) the chain is on the cytoplasmic side. A helical membrane pass occupies residues 368–388 (LQYLGLTIFELLMFTYCGELL). Residues 389-467 (SRHSIRSGDA…LAAKKTESEL (79 aa)) are Extracellular-facing.

It belongs to the insect chemoreceptor superfamily. Heteromeric odorant receptor channel (TC 1.A.69) family. Or2a subfamily. As to quaternary structure, interacts with Orco. Complexes exist early in the endomembrane system in olfactory sensory neurons (OSNs), coupling these complexes to the conserved ciliary trafficking pathway. In terms of tissue distribution, expressed in 15% of the 120 sensory neurons within the maxillary palp.

The protein localises to the cell membrane. Odorant receptor which mediates acceptance or avoidance behavior, depending on its substrates. The odorant receptor repertoire encodes a large collection of odor stimuli that vary widely in identity, intensity, and duration. May form a complex with Orco to form odorant-sensing units, providing sensitive and prolonged odorant signaling and calcium permeability. The sequence is that of Putative odorant receptor 85e (Or85e) from Drosophila melanogaster (Fruit fly).